Reading from the N-terminus, the 276-residue chain is MKAQILREMKVLTAIEPEFEVQRRVAFIKTKLKEARSKALVLGISGGVDSSTAGRLCQLAVDSLNHENSQGGYQFIAVRLPYQIQKDEHEAQLACQFIQPSKLVTVNVHQGVDGVHSATVAALAEAGLPLPDVAKVDFVKGNVKARMRMIAQYELAGLVGGLVVGTDHSAENITGFYTKWGDGACDLAPLFGLNKRQVRQLAAYLGAPKSLVHKAPTADLEDNKPLLEDEVALGLTYAQIDDFLEGKDVGKAVEDKLIGIYKATQHKRQPIPTIYD.

G43 to S50 is an ATP binding site. D49 is a Mg(2+) binding site. Position 146 (R146) interacts with deamido-NAD(+). T166 contributes to the ATP binding site. E171 serves as a coordination point for Mg(2+). Deamido-NAD(+) is bound by residues K179 and D186. ATP is bound by residues K195 and T217. Deamido-NAD(+) is bound at residue H266 to K267.

It belongs to the NAD synthetase family. In terms of assembly, homodimer.

The enzyme catalyses deamido-NAD(+) + NH4(+) + ATP = AMP + diphosphate + NAD(+) + H(+). Its pathway is cofactor biosynthesis; NAD(+) biosynthesis; NAD(+) from deamido-NAD(+) (ammonia route): step 1/1. Catalyzes the ATP-dependent amidation of deamido-NAD to form NAD. Uses ammonia as a nitrogen source. In Shewanella baltica (strain OS185), this protein is NH(3)-dependent NAD(+) synthetase.